We begin with the raw amino-acid sequence, 180 residues long: Bifunctional protein PyrR (180 aa).

A PRPP-binding motif is present at residues 99-111; the sequence is VILVDDVLYTCRT.

This sequence belongs to the purine/pyrimidine phosphoribosyltransferase family. PyrR subfamily. In terms of assembly, homodimer and homohexamer; in equilibrium.

The enzyme catalyses UMP + diphosphate = 5-phospho-alpha-D-ribose 1-diphosphate + uracil. Functionally, regulates transcriptional attenuation of the pyrimidine nucleotide (pyr) operon by binding in a uridine-dependent manner to specific sites on pyr mRNA. This disrupts an antiterminator hairpin in the RNA and favors formation of a downstream transcription terminator, leading to a reduced expression of downstream genes. In terms of biological role, also displays a weak uracil phosphoribosyltransferase activity which is not physiologically significant. The polypeptide is Bifunctional protein PyrR (Clostridium botulinum (strain Alaska E43 / Type E3)).